Consider the following 771-residue polypeptide: Hyperosmolality-gated Ca2+ permeable channel 1.2 (771 aa).

Over 1-4 (MATL) the chain is Extracellular. A helical transmembrane segment spans residues 5–27 (QDIGVSAGINILSAFVFFIIFAV). Residues 28 to 100 (LRLQPFNDRV…AGLDSVVYLR (73 aa)) are Cytoplasmic-facing. Residues 101–125 (IYWLGLKIFTPIAVLAWAVLVPVNW) traverse the membrane as a helical segment. Residues 126–156 (TNNTLEMAKQLRNVTSSDIDKLSVSNIPEYS) are Extracellular-facing. A helical transmembrane segment spans residues 157 to 178 (MRFWTHIVMAYAFTIWTCYVLM). Over 179-374 (KEYETIANMR…AIPYVSLTVR (196 aa)) the chain is Cytoplasmic. A helical transmembrane segment spans residues 375 to 401 (RLIMHVAFFFLTFFFIVPIAFVQSLAT). At 402–419 (IEGIVKAAPFLKFIVDDK) the chain is on the extracellular side. Residues 420 to 445 (FMKSVIQGFLPGIALKLFLAFLPSIL) traverse the membrane as a helical segment. The Cytoplasmic segment spans residues 446–462 (MIMSKFEGFTSISSLER). The helical transmembrane segment at 463-485 (RAAFRYYIFNLVNVFLASVIAGA) threads the bilayer. The Extracellular portion of the chain corresponds to 486–504 (AFEQLNSFLNQSANQIPKT). A helical transmembrane segment spans residues 505 to 533 (IGVAIPMKATFFITYIMVDGWAGVAGEIL). Topologically, residues 534 to 566 (MLKPLIMFHLKNAFLVKTDKDREEAMDPGSIGF) are cytoplasmic. Residues 567-588 (NTGEPRIQLYFLLGLVYAPVTP) traverse the membrane as a helical segment. A topological domain (extracellular) is located at residue Met-589. The helical transmembrane segment at 590–605 (LLPFILVFFALAYIVY) threads the bilayer. Residues 606 to 625 (RHQIINVYNQEYESAAAFWP) lie on the Cytoplasmic side of the membrane. Residues 626-648 (DVHGRVIAALVISQLLLMGLLGT) form a helical membrane-spanning segment. The Extracellular segment spans residues 649–651 (KHA). The helical transmembrane segment at 652-670 (ALAAPFLIALPVLTIGFHH) threads the bilayer. At 671–771 (FCKGRYEPAF…PSLPFSGKLV (101 aa)) the chain is on the cytoplasmic side. Residues 741–771 (PTKRQSRRNTPAPSIISGDDSPSLPFSGKLV) are disordered.

It belongs to the CSC1 (TC 1.A.17) family. As to quaternary structure, homodimer.

The protein localises to the membrane. With respect to regulation, activated by hyperosmotic shock after mannitol or NaCl treatment. Activated by mechanical pressure: activated in response to membrane stretch and poke. Membrane lipids play a key role in mechanosensation by acting as a wall mainly formed by lipid head groups. In terms of biological role, acts as an osmosensitive calcium-permeable cation channel. Specifically conducts cations including Ca(2+), K(+) and Na(+) in vitro. Inactivation or closure of the channel is calcium-dependent. Mechanosensitive ion channel that converts mechanical stimuli into a flow of ions: activated in response to membrane stretch and poke. In Arabidopsis thaliana (Mouse-ear cress), this protein is Hyperosmolality-gated Ca2+ permeable channel 1.2.